Reading from the N-terminus, the 161-residue chain is Large ribosomal subunit protein uL10 (161 aa).

The protein belongs to the universal ribosomal protein uL10 family. As to quaternary structure, part of the ribosomal stalk of the 50S ribosomal subunit. The N-terminus interacts with L11 and the large rRNA to form the base of the stalk. The C-terminus forms an elongated spine to which L12 dimers bind in a sequential fashion forming a multimeric L10(L12)X complex.

Its function is as follows. Forms part of the ribosomal stalk, playing a central role in the interaction of the ribosome with GTP-bound translation factors. The protein is Large ribosomal subunit protein uL10 (rplJ) of Wigglesworthia glossinidia brevipalpis.